Consider the following 387-residue polypeptide: 3-ketoacyl-CoA thiolase (387 aa).

C91 (acyl-thioester intermediate) is an active-site residue. Catalysis depends on proton acceptor residues H343 and C373.

Belongs to the thiolase-like superfamily. Thiolase family. As to quaternary structure, heterotetramer of two alpha chains (FadB) and two beta chains (FadA).

The protein resides in the cytoplasm. The enzyme catalyses an acyl-CoA + acetyl-CoA = a 3-oxoacyl-CoA + CoA. It functions in the pathway lipid metabolism; fatty acid beta-oxidation. Its function is as follows. Catalyzes the final step of fatty acid oxidation in which acetyl-CoA is released and the CoA ester of a fatty acid two carbons shorter is formed. The polypeptide is 3-ketoacyl-CoA thiolase (Aliivibrio salmonicida (strain LFI1238) (Vibrio salmonicida (strain LFI1238))).